The primary structure comprises 1103 residues: Mediator of RNA polymerase II transcription subunit 14 (1103 aa).

Disordered regions lie at residues Met1–Gln63, Val120–Gln140, and Leu1054–Asp1103. The span at Ser1073–Asp1103 shows a compositional bias: polar residues.

This sequence belongs to the Mediator complex subunit 14 family. In terms of assembly, component of the Mediator complex.

It is found in the nucleus. In terms of biological role, component of the Mediator complex, a coactivator involved in the regulated transcription of nearly all RNA polymerase II-dependent genes. Mediator functions as a bridge to convey information from gene-specific regulatory proteins to the basal RNA polymerase II transcription machinery. Mediator is recruited to promoters by direct interactions with regulatory proteins and serves as a scaffold for the assembly of a functional preinitiation complex with RNA polymerase II and the general transcription factors. In Aspergillus terreus (strain NIH 2624 / FGSC A1156), this protein is Mediator of RNA polymerase II transcription subunit 14 (rgr1).